A 537-amino-acid chain; its full sequence is Tyrosine-protein kinase Yes (537 aa).

A compositionally biased stretch (basic and acidic residues) spans 1–22; it reads MGCIKSKEDKGPSIKYRTEPKP. A disordered region spans residues 1 to 60; that stretch reads MGCIKSKEDKGPSIKYRTEPKPDPGSQYGADPTQATQSPGIKGPAPNFNSHSMTPFGGSS. The N-myristoyl glycine moiety is linked to residue Gly-2. Cys-3 carries the S-palmitoyl cysteine; in membrane form lipid modification. The 62-residue stretch at 85–146 folds into the SH3 domain; sequence GGVTVFVALY…PSNYVAPADS (62 aa). The SH2 domain maps to 152–249; that stretch reads WYFGKMGRKD…GLCYRLTTVC (98 aa). The Protein kinase domain maps to 271–524; that stretch reads LRLDVKLGQG…YIQSFLEDYF (254 aa). ATP is bound by residues 277–285 and Lys-299; that span reads LGQGCFGEV. The active-site Proton acceptor is the Asp-390. At Tyr-420 the chain carries Phosphotyrosine; by autocatalysis. Phosphotyrosine; by CSK is present on Tyr-531.

Belongs to the protein kinase superfamily. Tyr protein kinase family. SRC subfamily. Autophosphorylated at Tyr-420 inducing activation. In terms of processing, palmitoylation at Cys-3 promotes membrane localization.

Its subcellular location is the cell membrane. It localises to the cytoplasm. The protein resides in the cytoskeleton. It is found in the microtubule organizing center. The protein localises to the centrosome. Its subcellular location is the cytosol. It localises to the cell junction. The enzyme catalyses L-tyrosyl-[protein] + ATP = O-phospho-L-tyrosyl-[protein] + ADP + H(+). Non-receptor protein tyrosine kinase that is involved in the regulation of cell growth and survival, apoptosis, cell-cell adhesion, cytoskeleton remodeling, differentiation, G2/M progression and cytokinesis. The chain is Tyrosine-protein kinase Yes (yes1) from Xenopus laevis (African clawed frog).